The sequence spans 260 residues: Crotonyl-CoA hydratase (260 aa).

The active-site Nucleophile is the E114. The active-site Proton acceptor is the E134.

It belongs to the enoyl-CoA hydratase/isomerase family. As to quaternary structure, homotetramer.

It localises to the cytoplasm. The catalysed reaction is 3-hydroxybutanoyl-CoA = (2E)-butenoyl-CoA + H2O. It catalyses the reaction a short-chain (3S)-3-hydroxyacyl-CoA = a short-chain (2E)-enoyl-CoA + H2O. Its pathway is lipid metabolism; butanoate metabolism. Functionally, involved in syntrophic growth of S.wolfei with butyrate, as part of the butyrate oxidation pathway. Probably catalyzes the hydration of crotonyl-CoA to 3-hydroxybutyryl-CoA. The protein is Crotonyl-CoA hydratase of Syntrophomonas wolfei subsp. wolfei (strain DSM 2245B / Goettingen).